The sequence spans 140 residues: Profilin (140 aa).

This sequence belongs to the profilin family. In terms of assembly, occurs in many kinds of cells as a complex with monomeric actin in a 1:1 ratio.

Binds to actin and affects the structure of the cytoskeleton. At high concentrations, profilin prevents the polymerization of actin, whereas it enhances it at low concentrations. By binding to PIP2, it inhibits the formation of IP3 and DG. This Suberites domuncula (Sponge) protein is Profilin.